Consider the following 1024-residue polypeptide: Error-prone DNA polymerase (1024 aa).

It belongs to the DNA polymerase type-C family. DnaE2 subfamily.

It localises to the cytoplasm. The enzyme catalyses DNA(n) + a 2'-deoxyribonucleoside 5'-triphosphate = DNA(n+1) + diphosphate. Its function is as follows. DNA polymerase involved in damage-induced mutagenesis and translesion synthesis (TLS). It is not the major replicative DNA polymerase. This is Error-prone DNA polymerase from Vibrio campbellii (strain ATCC BAA-1116).